Consider the following 906-residue polypeptide: Protein translocase subunit SecA (906 aa).

ATP-binding positions include glutamine 89, 107 to 111 (GEGKT), and aspartate 502. The tract at residues 829 to 898 (EAPPEPELPP…ACPCGSGKKY (70 aa)) is disordered. Positions 858-877 (WSDHQHDERNVPAAERDPAD) are enriched in basic and acidic residues. Positions 890, 892, 901, and 902 each coordinate Zn(2+).

The protein belongs to the SecA family. As to quaternary structure, monomer and homodimer. Part of the essential Sec protein translocation apparatus which comprises SecA, SecYEG and auxiliary proteins SecDF-YajC and YidC. The cofactor is Zn(2+).

The protein localises to the cell inner membrane. Its subcellular location is the cytoplasm. It catalyses the reaction ATP + H2O + cellular proteinSide 1 = ADP + phosphate + cellular proteinSide 2.. In terms of biological role, part of the Sec protein translocase complex. Interacts with the SecYEG preprotein conducting channel. Has a central role in coupling the hydrolysis of ATP to the transfer of proteins into and across the cell membrane, serving both as a receptor for the preprotein-SecB complex and as an ATP-driven molecular motor driving the stepwise translocation of polypeptide chains across the membrane. This is Protein translocase subunit SecA from Brucella anthropi (strain ATCC 49188 / DSM 6882 / CCUG 24695 / JCM 21032 / LMG 3331 / NBRC 15819 / NCTC 12168 / Alc 37) (Ochrobactrum anthropi).